The chain runs to 574 residues: Arginine--tRNA ligase (574 aa).

The short motif at 124 to 134 is the 'HIGH' region element; that stretch reads ANPNGPLHIGH.

The protein belongs to the class-I aminoacyl-tRNA synthetase family.

It localises to the cytoplasm. It catalyses the reaction tRNA(Arg) + L-arginine + ATP = L-arginyl-tRNA(Arg) + AMP + diphosphate. The protein is Arginine--tRNA ligase of Methanococcus aeolicus (strain ATCC BAA-1280 / DSM 17508 / OCM 812 / Nankai-3).